The following is a 137-amino-acid chain: Insulin-like peptide 2 (137 aa).

Residues Met1 to Gly26 form the signal peptide. Intrachain disulfides connect Cys29–Cys119, Cys41–Cys132, and Cys118–Cys123. Positions Ala53–Val104 are cleaved as a propeptide — connecting peptide.

The protein belongs to the insulin family. Heterodimer of a B chain and an A chain linked by two disulfide bonds. Broadly expressed at a low level in the embryonic mesoderm, beginning at stage 12. Expressed at a high level in the embryonic anterior midgut, with expression diminishing at late stage 16. Expressed at a low level in larval imaginal disks. Expressed at a high level in larval salivary glands and in seven cells of each larval brain hemisphere that may correspond to neurosecretory cells.

Its subcellular location is the secreted. In terms of biological role, possible ligand of InR/insulin-like receptor. Functionally, plays a role in regulating body size by increasing cell size and cell number of individual organs. Probably mediates its growth effects by acting as a ligand for the insulin receptor and transducing a signal via the Chico/PI3K/Akt(PKB) pathway. This is Insulin-like peptide 2 from Drosophila melanogaster (Fruit fly).